We begin with the raw amino-acid sequence, 328 residues long: Hairy/enhancer-of-split related with YRPW motif-like protein (328 aa).

Positions 1–54 are disordered; that stretch reads MKRPREPSGSDSESDGPIDVGREGELSQMARPLSTPSPSQMQARKKRRGIIEKR. A transcriptional repression and interaction with NCOR1 and SIN3A region spans residues 42 to 111; sequence QARKKRRGII…GGTGFFDARA (70 aa). Positions 43–98 constitute a bHLH domain; it reads ARKKRRGIIEKRRRDRINSSLSELRRLVPTAFEKQGSSKLEKAEVLQMTVDHLKML. The region spanning 116 to 153 is the Orange domain; the sequence is FRSIGFRECLTEVIRYLGVLEGPSSRADPVRIRLLSHL. Positions 236–272 are disordered; it reads LLPSRGASSTRRARPLERPAAPLPAAPSGRATRGSHM.

Belongs to the HEY family. In terms of assembly, self-associates. Interacts with GATA4, GATA6, HES1, HEY1 and HEY2. Interacts with HDAC1, NCOR1 and SIN3A.

It localises to the nucleus. Its function is as follows. Downstream effector of Notch signaling which may be required for cardiovascular development. Transcriptional repressor which binds preferentially to the canonical E box sequence 5'-CACGTG-3'. Represses transcription by the cardiac transcriptional activators GATA4 and GATA6. This chain is Hairy/enhancer-of-split related with YRPW motif-like protein (HEYL), found in Bos taurus (Bovine).